The following is a 417-amino-acid chain: Serpin H1 (417 aa).

The N-terminal stretch at 1 to 17 is a signal peptide; the sequence is MRSLLLGTLCLLAVALA. An N6-succinyllysine modification is found at Lys93. Asn119 and Asn124 each carry an N-linked (GlcNAc...) asparagine glycan. Position 140 is a phosphoserine (Ser140). Lys206 carries the post-translational modification N6-acetyllysine. N6-succinyllysine is present on Lys295. Residue Lys318 is modified to N6-acetyllysine. N-linked (GlcNAc...) asparagine glycosylation is present at Asn394. Residues 414 to 417 carry the Prevents secretion from ER motif; the sequence is RDEL.

The protein belongs to the serpin family.

It localises to the endoplasmic reticulum lumen. Binds specifically to collagen. Could be involved as a chaperone in the biosynthetic pathway of collagen. The chain is Serpin H1 (Serpinh1) from Mus musculus (Mouse).